The primary structure comprises 425 residues: Dihydroorotase (425 aa).

The Zn(2+) site is built by His-56 and His-58. Substrate contacts are provided by residues 58 to 60 and Asn-90; that span reads HYR. Residues Asp-148, His-175, and His-228 each coordinate Zn(2+). Asn-274 is a substrate binding site. Zn(2+) is bound at residue Asp-301. Asp-301 is a catalytic residue. Residues His-305 and 319-320 contribute to the substrate site; that span reads FG.

This sequence belongs to the metallo-dependent hydrolases superfamily. DHOase family. Class I DHOase subfamily. It depends on Zn(2+) as a cofactor.

It carries out the reaction (S)-dihydroorotate + H2O = N-carbamoyl-L-aspartate + H(+). It participates in pyrimidine metabolism; UMP biosynthesis via de novo pathway; (S)-dihydroorotate from bicarbonate: step 3/3. In terms of biological role, catalyzes the reversible cyclization of carbamoyl aspartate to dihydroorotate. In Lactobacillus acidophilus (strain ATCC 700396 / NCK56 / N2 / NCFM), this protein is Dihydroorotase.